We begin with the raw amino-acid sequence, 118 residues long: MTRVKRGSVARKYRKNILDFVSGFRGAHSKLFRTANQRRGRSLAYAYVDKNNSKRAFRRLWIARINAAARRDGITYSSVIHSLYKNRIALNRKTLAQIATLDAYCFSMIIEKVSKIKI.

It belongs to the bacterial ribosomal protein bL20 family.

It localises to the plastid. Its subcellular location is the chloroplast. Binds directly to 23S ribosomal RNA and is necessary for the in vitro assembly process of the 50S ribosomal subunit. It is not involved in the protein synthesizing functions of that subunit. In Adiantum capillus-veneris (Maidenhair fern), this protein is Large ribosomal subunit protein bL20c.